Here is a 427-residue protein sequence, read N- to C-terminus: Caspase recruitment domain-containing protein 8 (427 aa).

The tract at residues 1 to 23 is disordered; it reads MGIPTSSVSEEQESSEGQDSGDI. Residues 51–186 are ZU5; the sequence is FLGPEGNVDV…FYAVLEKPSF (136 aa). The region spanning 51–336 is the FIIND domain; that stretch reads FLGPEGNVDV…IQLGAASAPP (286 aa). A UPA region spans residues 187–336; it reads SLMGILLRIA…IQLGAASAPP (150 aa). Positions 336–426 constitute a CARD domain; sequence PAFSGAAFVK…YLVSYLRQQS (91 aa).

In terms of assembly, interacts with DPP9; leading to inhibit activation of the inflammasome. DPP9 acts via formation of a ternary complex, composed of a DPP9 homodimer, one full-length CARD8 protein, and one cleaved C-terminus of CARD8 (Caspase recruitment domain-containing protein 8, C-terminus). Interacts with DPP8; leading to inhibit activation of the inflammasome, probably via formation of a ternary complex with DPP8. Interacts with NLRP3. Interacts with IKBKG/NEMO. Interacts with DRAL. Binds to caspase-1 (CASP1), CARD16/pseudo-ICE and CARD18/ICEBERG. Interacts with NLRP2 (via NACHT domain). As to quaternary structure, interacts with the C-terminal part of CARD8 (Caspase recruitment domain-containing protein 8, C-terminus) in absence of pathogens and other damage-associated signals. Interacts with the N-terminal part of CARD8 (Caspase recruitment domain-containing protein 8, N-terminus) in absence of pathogens and other damage-associated signals. Homomultimer; forms the CARD8 inflammasome polymeric complex, a filament composed of homopolymers of this form in response to pathogens and other damage-associated signals. The CARD8 inflammasome polymeric complex directly recruits pro-caspase-1 (proCASP1) independently of PYCARD/ASC. Interacts (via CARD domain) with CASP1 (via CARD domain); leading to CASP1 activation. Undergoes autocatalytic processing within the FIIND domain to generate the N-terminal and C-terminal parts, which are associated non-covalently in absence of pathogens and other damage-associated signals. Post-translationally, ubiquitinated by the N-end rule pathway in response to pathogens and other damage-associated signals, leading to its degradation by the proteasome and subsequent release of the cleaved C-terminal part of the protein (Caspase recruitment domain-containing protein 8, C-terminus), which polymerizes and forms the CARD8 inflammasome.

Its subcellular location is the cytoplasm. The protein resides in the nucleus. The protein localises to the inflammasome. CARD8 inflammasome is inhibited by DPP8 and DPP9, which sequester the C-terminal fragment of CARD8 (Caspase recruitment domain-containing protein 8, C-terminus) in a ternary complex, thereby preventing CARD8 oligomerization and activation. CARD8 inflammasome is activated by Val-boroPro (Talabostat, PT-100), an inhibitor of dipeptidyl peptidases DPP8 and DPP9. Val-boroPro relieves inhibition of DPP8 and/or DPP9 by inducing the proteasome-mediated destruction of the N-terminal part of CARD8, releasing its C-terminal part from autoinhibition. Inflammasome sensor, which mediates inflammasome activation in response to various pathogen-associated signals, leading to subsequent pyroptosis of CD4(+) T-cells and macrophages. Inflammasomes are supramolecular complexes that assemble in the cytosol in response to pathogens and other damage-associated signals and play critical roles in innate immunity and inflammation. Acts as a recognition receptor (PRR): recognizes specific pathogens and other damage-associated signals, such as Val-boroPro inhibitor, and mediates CARD8 inflammasome activation. In response to pathogen-associated signals, the N-terminal part of CARD8 is degraded by the proteasome, releasing the cleaved C-terminal part of the protein (Caspase recruitment domain-containing protein 8, C-terminus), which polymerizes to initiate the formation of the inflammasome complex: the CARD8 inflammasome directly recruits pro-caspase-1 (proCASP1) independently of PYCARD/ASC and promotes caspase-1 (CASP1) activation, which subsequently cleaves and activates inflammatory cytokines IL1B and IL18 and gasdermin-D (GSDMD), leading to pyroptosis. Also acts as a negative regulator of the NLRP3 inflammasome. May also act as an inhibitor of NF-kappa-B activation. Its function is as follows. Constitutes the precursor of the CARD8 inflammasome, which mediates autoproteolytic processing within the FIIND domain to generate the N-terminal and C-terminal parts, which are associated non-covalently in absence of pathogens and other damage-associated signals. Functionally, regulatory part that prevents formation of the CARD8 inflammasome: in absence of pathogens and other damage-associated signals, interacts with the C-terminal part of CARD8 (Caspase recruitment domain-containing protein 8, C-terminus), preventing activation of the CARD8 inflammasome. In response to pathogen-associated signals, this part is ubiquitinated by the N-end rule pathway and degraded by the proteasome, releasing the cleaved C-terminal part of the protein, which polymerizes and forms the CARD8 inflammasome. In terms of biological role, constitutes the active part of the CARD8 inflammasome. In absence of pathogens and other damage-associated signals, interacts with the N-terminal part of CARD8 (Caspase recruitment domain-containing protein 8, N-terminus), preventing activation of the CARD8 inflammasome. In response to pathogen-associated signals, the N-terminal part of CARD8 is degraded by the proteasome, releasing this form, which polymerizes to form the CARD8 inflammasome complex: the CARD8 inflammasome complex then directly recruits pro-caspase-1 (proCASP1) and promotes caspase-1 (CASP1) activation, leading to gasdermin-D (GSDMD) cleavage and subsequent pyroptosis. This is Caspase recruitment domain-containing protein 8 from Pongo abelii (Sumatran orangutan).